The chain runs to 199 residues: Ras-related and estrogen-regulated growth inhibitor (199 aa).

Residues 13–20 (GRAGVGKS), 60–64 (DTAGQ), and 118–121 (NKAD) contribute to the GTP site.

This sequence belongs to the small GTPase superfamily. Ras family. In terms of tissue distribution, detected in heart, brain, placenta, lung, liver, skin, kidney and pancreas. Detected in estrogen receptor-positive breast-derived cell lines, but not in estrogen receptor-negative cell lines. Expression is decreased or lost in a significant proportion of primary breast tumors with poor clinical prognosis.

It localises to the cytoplasm. It catalyses the reaction GTP + H2O = GDP + phosphate + H(+). In terms of biological role, binds GDP/GTP and possesses intrinsic GTPase activity. Has higher affinity for GDP than for GTP. In cell lines overexpression leads to a reduction in the rate of proliferation, colony formation and in tumorigenic potential. The protein is Ras-related and estrogen-regulated growth inhibitor (RERG) of Homo sapiens (Human).